The primary structure comprises 357 residues: 4-hydroxy-3-methylbut-2-en-1-yl diphosphate synthase (flavodoxin) (357 aa).

4 residues coordinate [4Fe-4S] cluster: Cys265, Cys268, Cys300, and Glu307.

This sequence belongs to the IspG family. In terms of assembly, homodimer. [4Fe-4S] cluster is required as a cofactor.

It catalyses the reaction (2E)-4-hydroxy-3-methylbut-2-enyl diphosphate + oxidized [flavodoxin] + H2O + 2 H(+) = 2-C-methyl-D-erythritol 2,4-cyclic diphosphate + reduced [flavodoxin]. It participates in isoprenoid biosynthesis; isopentenyl diphosphate biosynthesis via DXP pathway; isopentenyl diphosphate from 1-deoxy-D-xylulose 5-phosphate: step 5/6. Its function is as follows. Converts 2C-methyl-D-erythritol 2,4-cyclodiphosphate (ME-2,4cPP) into 1-hydroxy-2-methyl-2-(E)-butenyl 4-diphosphate. This is 4-hydroxy-3-methylbut-2-en-1-yl diphosphate synthase (flavodoxin) from Aquifex aeolicus (strain VF5).